The chain runs to 375 residues: Alcohol dehydrogenase 1 (375 aa).

N-acetylalanine is present on alanine 1. Residues cysteine 46, histidine 68, cysteine 98, cysteine 101, cysteine 104, cysteine 112, and cysteine 175 each contribute to the Zn(2+) site. NAD(+)-binding positions include 200 to 205, aspartate 224, lysine 229, 293 to 295, and arginine 370; these read GLGGVG and VGL.

The protein belongs to the zinc-containing alcohol dehydrogenase family. Class-I subfamily. Zn(2+) serves as cofactor.

Its subcellular location is the cytoplasm. The catalysed reaction is a primary alcohol + NAD(+) = an aldehyde + NADH + H(+). It carries out the reaction a secondary alcohol + NAD(+) = a ketone + NADH + H(+). In Pelophylax perezi (Perez's frog), this protein is Alcohol dehydrogenase 1.